The primary structure comprises 426 residues: Histidine--tRNA ligase (426 aa).

Belongs to the class-II aminoacyl-tRNA synthetase family. In terms of assembly, homodimer.

Its subcellular location is the cytoplasm. It carries out the reaction tRNA(His) + L-histidine + ATP = L-histidyl-tRNA(His) + AMP + diphosphate + H(+). In Chlorobium phaeovibrioides (strain DSM 265 / 1930) (Prosthecochloris vibrioformis (strain DSM 265)), this protein is Histidine--tRNA ligase.